The primary structure comprises 481 residues: ATP synthase subunit beta (481 aa).

167–174 (GGAGVGKT) contributes to the ATP binding site.

Belongs to the ATPase alpha/beta chains family. In terms of assembly, F-type ATPases have 2 components, CF(1) - the catalytic core - and CF(0) - the membrane proton channel. CF(1) has five subunits: alpha(3), beta(3), gamma(1), delta(1), epsilon(1). CF(0) has three main subunits: a(1), b(2) and c(9-12). The alpha and beta chains form an alternating ring which encloses part of the gamma chain. CF(1) is attached to CF(0) by a central stalk formed by the gamma and epsilon chains, while a peripheral stalk is formed by the delta and b chains.

The protein resides in the cell membrane. It carries out the reaction ATP + H2O + 4 H(+)(in) = ADP + phosphate + 5 H(+)(out). Functionally, produces ATP from ADP in the presence of a proton gradient across the membrane. The catalytic sites are hosted primarily by the beta subunits. The sequence is that of ATP synthase subunit beta from Corynebacterium jeikeium (strain K411).